Consider the following 24-residue polypeptide: Cytochrome c oxidase subunit 5A-2, mitochondrial (24 aa).

The protein belongs to the cytochrome c oxidase subunit 5A family. As to quaternary structure, component of the cytochrome c oxidase (complex IV, CIV), a multisubunit enzyme composed of 14 subunits. The complex is composed of a catalytic core of 3 subunits MT-CO1, MT-CO2 and MT-CO3, encoded in the mitochondrial DNA, and 11 supernumerary subunits COX4I, COX5A, COX5B, COX6A, COX6B, COX6C, COX7A, COX7B, COX7C, COX8 and NDUFA4, which are encoded in the nuclear genome. The complex exists as a monomer or a dimer and forms supercomplexes (SCs) in the inner mitochondrial membrane with NADH-ubiquinone oxidoreductase (complex I, CI) and ubiquinol-cytochrome c oxidoreductase (cytochrome b-c1 complex, complex III, CIII), resulting in different assemblies (supercomplex SCI(1)III(2)IV(1) and megacomplex MCI(2)III(2)IV(2)).

Its subcellular location is the mitochondrion inner membrane. It functions in the pathway energy metabolism; oxidative phosphorylation. Functionally, component of the cytochrome c oxidase, the last enzyme in the mitochondrial electron transport chain which drives oxidative phosphorylation. The respiratory chain contains 3 multisubunit complexes succinate dehydrogenase (complex II, CII), ubiquinol-cytochrome c oxidoreductase (cytochrome b-c1 complex, complex III, CIII) and cytochrome c oxidase (complex IV, CIV), that cooperate to transfer electrons derived from NADH and succinate to molecular oxygen, creating an electrochemical gradient over the inner membrane that drives transmembrane transport and the ATP synthase. Cytochrome c oxidase is the component of the respiratory chain that catalyzes the reduction of oxygen to water. Electrons originating from reduced cytochrome c in the intermembrane space (IMS) are transferred via the dinuclear copper A center (CU(A)) of subunit 2 and heme A of subunit 1 to the active site in subunit 1, a binuclear center (BNC) formed by heme A3 and copper B (CU(B)). The BNC reduces molecular oxygen to 2 water molecules using 4 electrons from cytochrome c in the IMS and 4 protons from the mitochondrial matrix. This Thunnus obesus (Bigeye tuna) protein is Cytochrome c oxidase subunit 5A-2, mitochondrial.